The chain runs to 92 residues: Muscle LIM protein 1 (92 aa).

The region spanning 11–62 is the LIM zinc-binding domain; sequence CPACGKSVYAAEERVAGGYKFHKTCFKCSMCNKALDSTNCTEHEKELFCKNC. The Nuclear localization signal signature appears at 65–70; the sequence is RKYGPK.

In the embryo, expression is restricted to the somatic, visceral, and pharyngeal muscles. Within the somatic musculature, MLP60 is distributed throughout the muscle fibers. There is no expression in cardiac mesoderm or in fat body.

The protein resides in the cytoplasm. Its subcellular location is the nucleus. Functionally, positive regulator of myogenesis. This is Muscle LIM protein 1 (Mlp60A) from Drosophila melanogaster (Fruit fly).